We begin with the raw amino-acid sequence, 1492 residues long: DNA-directed RNA polymerase subunit beta' (1492 aa).

Zn(2+) contacts are provided by C67, C69, C82, and C85. Mg(2+)-binding residues include D499, D501, and D503. The Zn(2+) site is built by C867, C943, C950, and C953.

The protein belongs to the RNA polymerase beta' chain family. The RNAP catalytic core consists of 2 alpha, 1 beta, 1 beta' and 1 omega subunit. When a sigma factor is associated with the core the holoenzyme is formed, which can initiate transcription. Mg(2+) is required as a cofactor. Requires Zn(2+) as cofactor.

The enzyme catalyses RNA(n) + a ribonucleoside 5'-triphosphate = RNA(n+1) + diphosphate. In terms of biological role, DNA-dependent RNA polymerase catalyzes the transcription of DNA into RNA using the four ribonucleoside triphosphates as substrates. This is DNA-directed RNA polymerase subunit beta' from Chlorobium phaeobacteroides (strain DSM 266 / SMG 266 / 2430).